The primary structure comprises 330 residues: Embigin (330 aa).

The signal sequence occupies residues 1–33; that stretch reads MRSHTGLRALVAPGYPLLLLCLLAATRPDPAEG. Over 34-254 the chain is Extracellular; the sequence is DPTDPTFTSL…QLGESEEQNE (221 aa). Ig-like V-type domains follow at residues 38–161 and 162–256; these read PTFT…IHVP and KAHG…NELV. N-linked (GlcNAc...) asparagine glycosylation is found at asparagine 55, asparagine 62, asparagine 70, asparagine 101, asparagine 118, asparagine 191, asparagine 198, asparagine 216, and asparagine 221. Cystine bridges form between cysteine 89/cysteine 145 and cysteine 182/cysteine 240. Residues 255 to 283 traverse the membrane as a helical segment; the sequence is LVVLSFLVPLKPFLAILAEVILLVAIILL. Residues 284 to 330 are Cytoplasmic-facing; it reads CEVYTHKKKNDPDAGKEFEQIEQLKSDDSNGIENNVPRYRKTDSADQ. Positions 293 to 311 are enriched in basic and acidic residues; the sequence is NDPDAGKEFEQIEQLKSDD. The interval 293–330 is disordered; it reads NDPDAGKEFEQIEQLKSDDSNGIENNVPRYRKTDSADQ. Residue serine 312 is modified to Phosphoserine.

As to quaternary structure, interacts with SLC16A1, SLC16A6 and SLC16A7. Only member of the immunoglobulin superfamily to be expressed in embryonal carcinoma cells, which resemble multipotential cells of early embryos.

The protein resides in the cell membrane. It localises to the synapse. Functionally, plays a role in targeting the monocarboxylate transporters SLC16A1, SLC16A6 and SLC16A7 to the cell membrane. Plays a role in the outgrowth of motoneurons and in the formation of neuromuscular junctions. Following muscle denervation, promotes nerve terminal sprouting and the formation of additional acetylcholine receptor clusters at synaptic sites without affecting terminal Schwann cell number or morphology. Delays the retraction of terminal sprouts following re-innervation of denervated endplates. This Mus musculus (Mouse) protein is Embigin (Emb).